Here is a 1573-residue protein sequence, read N- to C-terminus: Synaptojanin-1 (1573 aa).

One can recognise an SAC domain in the interval 119-442; that stretch reads VRKVLNSGNF…GDSISKIYAG (324 aa). The tract at residues 500 to 899 is catalytic; the sequence is GSLRVSEQTL…GPPDGTVLVS (400 aa). Phosphoserine occurs at positions 820 and 830. Positions 902-971 constitute an RRM domain; it reads SSLPENNFFD…RTITIALKSP (70 aa). Positions 1029 to 1054 are enriched in low complexity; the sequence is HLQPSSSSGLGTSPSSSPRTSPCQSP. Disordered regions lie at residues 1029 to 1322, 1341 to 1360, 1370 to 1463, and 1535 to 1573; these read HLQP…PLKI, SVQTSPVPTPDPKRLIQLPS, VSCM…GFKD, and SRRPPPPPVPLLPPGTSPPVDPFTTLASKASPTLDFTER. Phosphoserine is present on Ser1053. The segment covering 1108 to 1130 has biased composition (pro residues); the sequence is PPPPRPVAPPTRPAPPQRPPPPS. 2 positions are modified to phosphoserine: Ser1150 and Ser1178. At Arg1201 the chain carries Omega-N-methylarginine. Thr1220 carries the post-translational modification Phosphothreonine. Residues 1221–1234 show a composition bias toward polar residues; that stretch reads PESQSKTSETSKGS. Ser1292 carries the phosphoserine modification. The segment covering 1293 to 1304 has biased composition (low complexity); the sequence is SHSLPSEASSQP. Residues 1313–1322 are compositionally biased toward basic and acidic residues; that stretch reads DGKRESPLKI. Ser1318 and Ser1345 each carry phosphoserine. Thr1349 is subject to Phosphothreonine. Polar residues predominate over residues 1382–1407; sequence RSQSQENMRSSPNPFITGLTRTNPFS. Repeat copies occupy residues 1396–1398, 1406–1408, and 1417–1419. Residues 1396 to 1419 are 3 X 3 AA repeats of N-P-F; the sequence is FITGLTRTNPFSDRTAAPGNPFRA. A compositionally biased stretch (pro residues) spans 1536–1555; the sequence is RRPPPPPVPLLPPGTSPPVD. Phosphoserine is present on residues Ser1551 and Ser1565.

This sequence belongs to the synaptojanin family. In the central section; belongs to the inositol 1,4,5-trisphosphate 5-phosphatase family. Interacts with ASH/GRB2. Interacts with PACSIN1, PACSIN2 and PACSIN3. Interacts with AMPH, SH3GL1, SH3GL2 and SH3GL3. Interacts with MYO1E (via SH3 domain). Interacts with BIN1 and DNM1. Interacts with EPS15.

Its subcellular location is the cytoplasm. It localises to the perinuclear region. The enzyme catalyses a 1,2-diacyl-sn-glycero-3-phospho-(1D-myo-inositol-4,5-bisphosphate) + H2O = a 1,2-diacyl-sn-glycero-3-phospho-(1D-myo-inositol 4-phosphate) + phosphate. Phosphatase that acts on various phosphoinositides, including phosphatidylinositol 4-phosphate, phosphatidylinositol (4,5)-bisphosphate and phosphatidylinositol (3,4,5)-trisphosphate. Has a role in clathrin-mediated endocytosis. Hydrolyzes PIP2 bound to actin regulatory proteins resulting in the rearrangement of actin filaments downstream of tyrosine kinase and ASH/GRB2. This chain is Synaptojanin-1 (SYNJ1), found in Homo sapiens (Human).